A 193-amino-acid polypeptide reads, in one-letter code: Large ribosomal subunit protein uL18 (193 aa).

Belongs to the universal ribosomal protein uL18 family. As to quaternary structure, part of the 50S ribosomal subunit. Contacts the 5S and 23S rRNAs.

Functionally, this is one of the proteins that bind and probably mediate the attachment of the 5S RNA into the large ribosomal subunit, where it forms part of the central protuberance. This Methanosphaera stadtmanae (strain ATCC 43021 / DSM 3091 / JCM 11832 / MCB-3) protein is Large ribosomal subunit protein uL18.